Consider the following 211-residue polypeptide: Ubiquitin-conjugating enzyme E2 S-B (211 aa).

A UBC core domain is found at 11–157 (HIIRRVYKEV…ARLMTDIHAQ (147 aa)). C95 serves as the catalytic Glycyl thioester intermediate. The disordered stretch occupies residues 158-211 (GTSLRGKDPTDPCSSASTPVVSGDGPMAKKHAGDRDKKLAAKKKTDKKRALRRL). A compositionally biased stretch (basic residues) spans 197-211 (AAKKKTDKKRALRRL).

Belongs to the ubiquitin-conjugating enzyme family.

It carries out the reaction S-ubiquitinyl-[E1 ubiquitin-activating enzyme]-L-cysteine + [E2 ubiquitin-conjugating enzyme]-L-cysteine = [E1 ubiquitin-activating enzyme]-L-cysteine + S-ubiquitinyl-[E2 ubiquitin-conjugating enzyme]-L-cysteine.. Its pathway is protein modification; protein ubiquitination. Its function is as follows. Catalyzes the covalent attachment of ubiquitin to other proteins. Acts as an essential factor of the anaphase promoting complex/cyclosome (APC/C), a cell cycle-regulated ubiquitin ligase that controls progression through mitosis. Acts by specifically elongating 'Lys-11'-linked polyubiquitin chains initiated by the E2 enzyme ube2c/ubch10 on APC/C substrates, enhancing the degradation of APC/C substrates by the proteasome and promoting mitotic exit. This Xenopus laevis (African clawed frog) protein is Ubiquitin-conjugating enzyme E2 S-B (ube2s-b).